A 999-amino-acid polypeptide reads, in one-letter code: MGVAGRNRPGAAWAVLLLLLLLPPLLLLAGAVPPGRGRAAGPQEDVDECAQGLDDCHADALCQNTPTSYKCSCKPGYQGEGRQCEDIDECGNELNGGCVHDCLNIPGNYRCTCFDGFMLAHDGHNCLDVDECLENNGGCQHTCVNVMGSYECCCKEGFFLSDNQHTCIHRSEEGLSCMNKDHGCSHICKEAPRGSVACECRPGFELAKNQRDCILTCNHGNGGCQHSCDDTADGPECSCHPQYKMHTDGRSCLEREDTVLEVTESNTTSVVDGDKRVKRRLLMETCAVNNGGCDRTCKDTSTGVHCSCPVGFTLQLDGKTCKDIDECQTRNGGCDHFCKNIVGSFDCGCKKGFKLLTDEKSCQDVDECSLDRTCDHSCINHPGTFACACNRGYTLYGFTHCGDTNECSINNGGCQQVCVNTVGSYECQCHPGYKLHWNKKDCVEVKGLLPTSVSPRVSLHCGKSGGGDGCFLRCHSGIHLSSDVTTIRTSVTFKLNEGKCSLKNAELFPEGLRPALPEKHSSVKESFRYVNLTCSSGKQVPGAPGRPSTPKEMFITVEFELETNQKEVTASCDLSCIVKRTEKRLRKAIRTLRKAVHREQFHLQLSGMNLDVAKKPPRTSERQAESCGVGQGHAENQCVSCRAGTYYDGARERCILCPNGTFQNEEGQMTCEPCPRPGNSGALKTPEAWNMSECGGLCQPGEYSADGFAPCQLCALGTFQPEAGRTSCFPCGGGLATKHQGATSFQDCETRVQCSPGHFYNTTTHRCIRCPVGTYQPEFGKNNCVSCPGNTTTDFDGSTNITQCKNRRCGGELGDFTGYIESPNYPGNYPANTECTWTINPPPKRRILIVVPEIFLPIEDDCGDYLVMRKTSSSNSVTTYETCQTYERPIAFTSRSKKLWIQFKSNEGNSARGFQVPYVTYDEDYQELIEDIVRDGRLYASENHQEILKDKKLIKALFDVLAHPQNYFKYTAQESREMFPRSFIRLLRSKVSRFLRPYK.

Positions 1–31 are cleaved as a signal peptide; that stretch reads MGVAGRNRPGAAWAVLLLLLLLPPLLLLAGA. In terms of domain architecture, EGF-like 1; calcium-binding spans 45 to 85; sequence DVDECAQGLDDCHADALCQNTPTSYKCSCKPGYQGEGRQCE. Intrachain disulfides connect C49/C62, C56/C71, C73/C84, C90/C102, C98/C111, and C113/C126. Positions 86-127 constitute an EGF-like 2; calcium-binding domain; it reads DIDECGNELNGGCVHDCLNIPGNYRCTCFDGFMLAHDGHNCL. Residues 128 to 168 enclose the EGF-like 3; calcium-binding domain; the sequence is DVDECLENNGGCQHTCVNVMGSYECCCKEGFFLSDNQHTCI. EGF-like domains are found at residues 177–213, 217–252, and 286–321; these read CMNK…QRDC, CNHG…GRSC, and CAVN…GKTC. The EGF-like 7; calcium-binding domain occupies 323-363; that stretch reads DIDECQTRNGGCDHFCKNIVGSFDCGCKKGFKLLTDEKSCQ. One can recognise an EGF-like 8; calcium-binding domain in the interval 364 to 402; the sequence is DVDECSLDRTCDHSCINHPGTFACACNRGYTLYGFTHCG. 6 cysteine pairs are disulfide-bonded: C368/C378, C374/C387, C389/C401, C407/C418, C414/C427, and C429/C442. The EGF-like 9; calcium-binding domain maps to 403-443; it reads DTNECSINNGGCQQVCVNTVGSYECQCHPGYKLHWNKKDCV. N-linked (GlcNAc...) asparagine glycosylation occurs at N659. A disulfide bridge connects residues C809 and C835. Residues 809–921 enclose the CUB domain; it reads CGGELGDFTG…RGFQVPYVTY (113 aa). The segment at 847-856 is interaction with the cholesterol-anchor of SHH; the sequence is ILIVVPEIFL. A disulfide bond links C862 and C883.

As to quaternary structure, forms homooligomers. Forms heterooligomers with SCUBE1. Forms heterooligomers with SCUBE3. Interacts with SHH via the cholesterol anchor of the dually lipid-modified SHH (ShhNp). Interacts with PTCH1. Interacts with VEGFR2. Post-translationally, N-glycosylated. As to expression, expressed in a broad spectrum of adult tissues.

The protein resides in the secreted. Its subcellular location is the cell surface. Lipid-binding protein required for SHH long-range signaling by binding to the dually lipid-modified SHH (ShhNp) and by promoting ShhNp mobilization, solubilization and release from the cell membrane. Acts by enhancing the proteolytic processing (shedding) of the lipid-modified N- and C- terminal of ShhNp at the cell surface. Synergizes with DISP1 to increase SHH secretion. Probable cell surface coreceptor for VEGFR2 involved in VEGFR2-mediated angiogenesis. This Homo sapiens (Human) protein is Signal peptide, CUB and EGF-like domain-containing protein 2.